Reading from the N-terminus, the 70-residue chain is Exodeoxyribonuclease 7 small subunit (70 aa).

Belongs to the XseB family. In terms of assembly, heterooligomer composed of large and small subunits.

It localises to the cytoplasm. It catalyses the reaction Exonucleolytic cleavage in either 5'- to 3'- or 3'- to 5'-direction to yield nucleoside 5'-phosphates.. Its function is as follows. Bidirectionally degrades single-stranded DNA into large acid-insoluble oligonucleotides, which are then degraded further into small acid-soluble oligonucleotides. This chain is Exodeoxyribonuclease 7 small subunit, found in Streptococcus gordonii (strain Challis / ATCC 35105 / BCRC 15272 / CH1 / DL1 / V288).